The sequence spans 292 residues: 33 kDa chaperonin (292 aa).

2 disulfides stabilise this stretch: Cys-230/Cys-232 and Cys-263/Cys-266.

Belongs to the HSP33 family. In terms of processing, under oxidizing conditions two disulfide bonds are formed involving the reactive cysteines. Under reducing conditions zinc is bound to the reactive cysteines and the protein is inactive.

The protein resides in the cytoplasm. Redox regulated molecular chaperone. Protects both thermally unfolding and oxidatively damaged proteins from irreversible aggregation. Plays an important role in the bacterial defense system toward oxidative stress. In Salmonella paratyphi A (strain ATCC 9150 / SARB42), this protein is 33 kDa chaperonin.